Reading from the N-terminus, the 157-residue chain is Protein BeeE (157 aa).

Belongs to the phage portal family.

This is Protein BeeE (beeE) from Escherichia coli (strain K12).